Here is a 154-residue protein sequence, read N- to C-terminus: MSAPVILVDADACPVKEEIYRVAWRHGAKVKVVSNSRLRVPDHPLIERVVVSDGFDAADDWIAEAANAQSIVVTADILLADRALKAGASVLAPNGKPFTLASIGPAIATRAIMADLRAGMGEGVGGPPPFSKADRARFLQALDAALVRVKRGLA.

This sequence belongs to the UPF0178 family.

The sequence is that of UPF0178 protein Sala_2376 from Sphingopyxis alaskensis (strain DSM 13593 / LMG 18877 / RB2256) (Sphingomonas alaskensis).